The sequence spans 159 residues: Ribosomal RNA large subunit methyltransferase H (159 aa).

Residues leucine 76, glycine 108, and 127–132 (FSKMTF) contribute to the S-adenosyl-L-methionine site.

The protein belongs to the RNA methyltransferase RlmH family. In terms of assembly, homodimer.

The protein resides in the cytoplasm. The catalysed reaction is pseudouridine(1915) in 23S rRNA + S-adenosyl-L-methionine = N(3)-methylpseudouridine(1915) in 23S rRNA + S-adenosyl-L-homocysteine + H(+). In terms of biological role, specifically methylates the pseudouridine at position 1915 (m3Psi1915) in 23S rRNA. This Clostridium novyi (strain NT) protein is Ribosomal RNA large subunit methyltransferase H.